The sequence spans 320 residues: Nuclease (320 aa).

His-155 acts as the Proton acceptor in catalysis. Asn-187 contacts Mg(2+). An N-linked (GlcNAc...) asparagine glycan is attached at Asn-204. Residues Cys-312 and Cys-317 are joined by a disulfide bond.

This sequence belongs to the DNA/RNA non-specific endonuclease family. In terms of assembly, homodimer; as a result of non-covalent interactions and not through the disulfide linkages between the two monomers. The cofactor is Mg(2+). Mn(2+) serves as cofactor. Post-translationally, glycosylated.

The protein resides in the secreted. Functionally, this enzyme has both RNase and DNase activity. The chain is Nuclease from Syncephalastrum racemosum (Filamentous fungus).